An 862-amino-acid polypeptide reads, in one-letter code: Cone cGMP-specific 3',5'-cyclic phosphodiesterase subunit alpha' (862 aa).

2 consecutive GAF domains span residues 75-224 and 256-433; these read SMEK…SLVL and DIER…GWSV. 3',5'-cyclic GMP is bound by residues S97, N116, 169 to 172, and T176; that span reads DKKT. Residues 486–819 enclose the PDEase domain; it reads DEKDLIRILK…VEWKTRADEY (334 aa). H562 functions as the Proton donor in the catalytic mechanism. The a divalent metal cation site is built by H566, H602, D603, and D723. A compositionally biased stretch (basic and acidic residues) spans 830–842; it reads KKKEEEAAAKKAE. The segment at 830 to 862 is disordered; sequence KKKEEEAAAKKAENAAGGGGGGEDGKSKTCIVL. C859 is modified (cysteine methyl ester). A lipid anchor (S-geranylgeranyl cysteine) is attached at C859. The propeptide at 860–862 is removed in mature form; the sequence is IVL.

The protein belongs to the cyclic nucleotide phosphodiesterase family. Composed of two alpha' subunits that are associated with 3 smaller proteins of 11, 13, and 15 kDa. Requires a divalent metal cation as cofactor.

It is found in the cell membrane. The enzyme catalyses 3',5'-cyclic GMP + H2O = GMP + H(+). In terms of biological role, as cone-specific cGMP phosphodiesterase, it plays an essential role in light detection and cone phototransduction by rapidly decreasing intracellular levels of cGMP. In Gallus gallus (Chicken), this protein is Cone cGMP-specific 3',5'-cyclic phosphodiesterase subunit alpha' (PDE6C).